We begin with the raw amino-acid sequence, 573 residues long: NEDD4-binding protein 3-B (573 aa).

Disordered regions lie at residues 119 to 138 (EFSK…RFGP), 173 to 220 (CVGS…NSYS), and 384 to 405 (GENE…NLED). The span at 125–135 (LPERGHSDKSR) shows a compositional bias: basic and acidic residues. Over residues 186–196 (SNSHSNNPSES) the composition is skewed to low complexity. Polar residues-rich tracts occupy residues 207 to 220 (DSKQ…NSYS) and 392 to 401 (KQSQSDNSGP). The stretch at 287–474 (ESVEDVARQL…CLQALEDVKS (188 aa)) forms a coiled coil.

This sequence belongs to the N4BP3 family.

It localises to the cytoplasmic vesicle. It is found in the cell projection. The protein resides in the axon. Its subcellular location is the dendrite. Functionally, plays a role in axon and dendrite arborization during cranial nerve development. Also important for neural crest migration and early development of other anterior structures including eye, brain and cranial cartilage. In Xenopus laevis (African clawed frog), this protein is NEDD4-binding protein 3-B.